The sequence spans 203 residues: Potassium channel Cha6605_3372 (203 aa).

The Cytoplasmic portion of the chain corresponds to 1–7; that stretch reads MVEAPEQ. Residues 8–31 form a helical membrane-spanning segment; the sequence is SETGRIEAFSDGVFAIAITLLVLE. Positions 12–18 match the RxxxFSD motif motif; sequence RIEAFSD. Over 32–52 the chain is Extracellular; the sequence is IKVPQHKIVETVGLVSSLLSL. The tract at residues 37–42 is short helix H1; that stretch reads HKIVET. A short helix H2 region spans residues 44–50; that stretch reads GLVSSLL. The chain crosses the membrane as a helical span at residues 53 to 78; the sequence is WPSYLAFLTSFASILVMWVNHHRIFS. Residues 79 to 84 are Cytoplasmic-facing; sequence LVARTD. The chain crosses the membrane as a helical span at residues 85–110; that stretch reads HAFFYWNGLLLMLVTFVPFPTALLAE. The Extracellular portion of the chain corresponds to 111-117; sequence YLIHPQA. The helical transmembrane segment at 118–142 threads the bilayer; the sequence is RVAASVYAGIFLAIAIVFNRLWKHA. The Cytoplasmic portion of the chain corresponds to 143–154; that stretch reads ATADRLLAQKAD. The helical transmembrane segment at 155–181 threads the bilayer; it reads RHEVDAITKQYRFGPGLYLVAFALSFI. At 182–183 the chain is on the extracellular side; it reads SV. The helical transmembrane segment at 184 to 199 threads the bilayer; sequence WLSVGVCFVLAIYFAL. Residues 200–203 lie on the Cytoplasmic side of the membrane; it reads RSNA.

Belongs to the TMEM175 family. As to quaternary structure, homotetramer.

It is found in the membrane. The enzyme catalyses K(+)(in) = K(+)(out). Its function is as follows. Potassium channel. The channel is permeable for K(+), Rb(+) and Cs(+), while it is unable to conduct Na(+). The chain is Potassium channel Cha6605_3372 from Chamaesiphon minutus (strain ATCC 27169 / PCC 6605).